A 236-amino-acid polypeptide reads, in one-letter code: UPF0257 lipoprotein YnfC (236 aa).

The N-terminal stretch at 1–16 (MKYKLLPCLLAILLTG) is a signal peptide. Cys-17 is lipidated: N-palmitoyl cysteine. Residue Cys-17 is the site of S-diacylglycerol cysteine attachment.

The protein belongs to the UPF0257 family.

It localises to the cell membrane. The protein is UPF0257 lipoprotein YnfC of Escherichia coli O127:H6 (strain E2348/69 / EPEC).